Here is a 731-residue protein sequence, read N- to C-terminus: Actin filament-associated protein 1 (731 aa).

Methionine 1 is modified (N-acetylmethionine). The disordered stretch occupies residues 46–90 (VKDHAQKAETNNLPAPPQMPLPEIPQPWLPPDSGPPPLPTSSLPE). The segment covering 59-84 (PAPPQMPLPEIPQPWLPPDSGPPPLP) has biased composition (pro residues). The SH3-binding motif lies at 70-73 (PQPW). The SH2-binding 1 motif lies at 93–96 (YEEA). A disordered region spans residues 118 to 138 (GSSYESYDEEEEDGKGKKTQH). Positions 152–248 (DAKICAFLLR…WLKVIKEAYS (97 aa)) constitute a PH 1 domain. A disordered region spans residues 252–318 (GPVDPECSPP…SKSEAKGTVS (67 aa)). Residues 271 to 284 (AELEKKLSSERPSS) are compositionally biased toward basic and acidic residues. A phosphoserine mark is found at serine 283 and serine 284. Positions 348–442 (DVPTCGYLNV…WIGILLAETG (95 aa)) constitute a PH 2 domain. The SH2-binding 2 motif lies at 452–457 (YDYIDV). The tract at residues 511–550 (SLKNKKPPASSNGLPVKGRAPSSQQKKVESAGGVKRTASN) is disordered. Serine 549 is subject to Phosphoserine. The stretch at 558-649 (KNRVEADAKR…VKESLKKALA (92 aa)) forms a coiled coil. The segment at 595–638 (DLRAAIEVNAGRKTQVALEDKLKRLEEECKQREAERVSLELELT) is interaction with F-actin. The tract at residues 657-731 (AIEPKSGTSS…AREWELKNGT (75 aa)) is disordered. Phosphoserine is present on residues serine 665, serine 666, and serine 669. Threonine 676 bears the Phosphothreonine mark. Residues 678 to 687 (ENSPISSCDT) are compositionally biased toward polar residues. Residues serine 680 and serine 688 each carry the phosphoserine modification. Residues 721–731 (KAREWELKNGT) are compositionally biased toward basic and acidic residues.

As to quaternary structure, monomer and homomultimer. Interacts via its C-terminus with F-actin; probably involving AFAP1 multimers. Interacts with activated SRC SH3-SH2 domains. Interacts via its PH 1 domain with PRKCA, PRKCB and PRKCI. Phosphorylated on tyrosine residues. In terms of tissue distribution, widely expressed with highest levels in brain.

The protein localises to the cytoplasm. The protein resides in the cytoskeleton. Its subcellular location is the stress fiber. Its function is as follows. Can cross-link actin filaments into both network and bundle structures. May modulate changes in actin filament integrity and induce lamellipodia formation. May function as an adapter molecule that links other proteins, such as SRC and PKC to the actin cytoskeleton. The chain is Actin filament-associated protein 1 (Afap1) from Rattus norvegicus (Rat).